The following is a 320-amino-acid chain: Polyketide transferase FFUJ_12241 (320 aa).

The tract at residues Arg58–Trp298 is abhydrolase domain.

Belongs to the polyketide transferase af380 family.

In terms of biological role, polyketide transferase; part of the gene cluster that mediates the biosynthesis of fujikurins A-D, secondary metabolites playing a role during rice infection. The polyketide synthase PKS19 acts with the trans-enoyl reductase FFUJ_12240 and the polyketide transferase FFUJ_12241 to produce fujikurins, however, the biosynthesis pathway has not been identified yet. In Gibberella fujikuroi (strain CBS 195.34 / IMI 58289 / NRRL A-6831) (Bakanae and foot rot disease fungus), this protein is Polyketide transferase FFUJ_12241.